Consider the following 273-residue polypeptide: Aliphatic sulfonates import ATP-binding protein SsuB 2 (273 aa).

Residues 17–241 enclose the ABC transporter domain; the sequence is LLDLRITRKL…PRDRRDPTLA (225 aa). Position 50 to 57 (50 to 57) interacts with ATP; that stretch reads GPSGCGKS.

It belongs to the ABC transporter superfamily. Aliphatic sulfonates importer (TC 3.A.1.17.2) family. The complex is composed of two ATP-binding proteins (SsuB), two transmembrane proteins (SsuC) and a solute-binding protein (SsuA).

The protein resides in the cell inner membrane. The enzyme catalyses ATP + H2O + aliphatic sulfonate-[sulfonate-binding protein]Side 1 = ADP + phosphate + aliphatic sulfonateSide 2 + [sulfonate-binding protein]Side 1.. Part of the ABC transporter complex SsuABC involved in aliphatic sulfonates import. Responsible for energy coupling to the transport system. The sequence is that of Aliphatic sulfonates import ATP-binding protein SsuB 2 from Burkholderia lata (strain ATCC 17760 / DSM 23089 / LMG 22485 / NCIMB 9086 / R18194 / 383).